A 189-amino-acid chain; its full sequence is Protein jagunal homolog (189 aa).

Topologically, residues 1 to 34 (MSSRGVRAAGTDGNDFQNRQRIAQHYQESAQYKS) are cytoplasmic. A helical membrane pass occupies residues 35–55 (VLKWFFVPHFLILVFMWLKVG). Residues 56–75 (SEFLRYNFGWKNAFFERLDM) lie on the Lumenal side of the membrane. Residues 76 to 96 (PAAYPWEYVWCLSFIPIVLAL) traverse the membrane as a helical segment. The Cytoplasmic segment spans residues 97 to 105 (SSFQRNKLK). Residues 106 to 126 (VLHYAYYAEFICGIFPCMIGL) traverse the membrane as a helical segment. The Lumenal portion of the chain corresponds to 127–150 (GGQLPELLEYANDMEGSNTPTFKG). The chain crosses the membrane as a helical span at residues 151 to 171 (IFPMVIIWYIFFAVALQIHGF). Residues 172-189 (SMYFMHHLAAAWAPVKRD) are Cytoplasmic-facing.

Belongs to the jagunal family.

It localises to the endoplasmic reticulum membrane. In Caenorhabditis briggsae, this protein is Protein jagunal homolog.